Here is a 293-residue protein sequence, read N- to C-terminus: Fructose-bisphosphate aldolase (293 aa).

Ser-50 is a D-glyceraldehyde 3-phosphate binding site. Asp-85 acts as the Proton donor in catalysis. Zn(2+)-binding residues include His-86, Asp-106, Glu-136, and His-178. Gly-179 lines the dihydroxyacetone phosphate pocket. His-208 is a binding site for Zn(2+). Dihydroxyacetone phosphate-binding positions include Gly-209–Ser-211 and Asn-230–Thr-233.

The protein belongs to the class II fructose-bisphosphate aldolase family. Requires Zn(2+) as cofactor.

It carries out the reaction beta-D-fructose 1,6-bisphosphate = D-glyceraldehyde 3-phosphate + dihydroxyacetone phosphate. It functions in the pathway carbohydrate degradation; glycolysis; D-glyceraldehyde 3-phosphate and glycerone phosphate from D-glucose: step 4/4. Its function is as follows. Catalyzes the aldol condensation of dihydroxyacetone phosphate (DHAP or glycerone-phosphate) with glyceraldehyde 3-phosphate (G3P) to form fructose 1,6-bisphosphate (FBP) in gluconeogenesis and the reverse reaction in glycolysis. The polypeptide is Fructose-bisphosphate aldolase (fba) (Streptococcus pyogenes serotype M1).